Consider the following 247-residue polypeptide: MSHRDTLFSAPIARLGDWTFDERVAEVFPDMIQRSVPGYSNIISMIGMLAERFVQPDTQVYDLGCSLGAATLSVRRNIRHEHCRIIAVDNSPAMIERCRRHIDAYKAPTPVEVVEGDIRDITIENASMVVLNFTLQFLEPAERQALLDKIYLGLNPGGALVLSEKFSFEDAKVGELLFNMHHDFKRANGYSELEISQKRSMLENVMLTDSVETHKARLRKAGFEHSELWFQCFNFGSLVALKAGVAA.

Residues Tyr-39, 64 to 66 (GCS), 89 to 90 (DN), 117 to 118 (DI), Asn-132, and Arg-199 contribute to the S-adenosyl-L-methionine site.

The protein belongs to the class I-like SAM-binding methyltransferase superfamily. Cx-SAM synthase family. In terms of assembly, homodimer.

It catalyses the reaction prephenate + S-adenosyl-L-methionine = carboxy-S-adenosyl-L-methionine + 3-phenylpyruvate + H2O. Its function is as follows. Catalyzes the conversion of S-adenosyl-L-methionine (SAM) to carboxy-S-adenosyl-L-methionine (Cx-SAM). The chain is Carboxy-S-adenosyl-L-methionine synthase from Salmonella arizonae (strain ATCC BAA-731 / CDC346-86 / RSK2980).